A 319-amino-acid polypeptide reads, in one-letter code: Beta-ketoacyl-[acyl-carrier-protein] synthase III (319 aa).

Residues Cys115 and His246 contribute to the active site. Residues 247–251 form an ACP-binding region; sequence QANLR. Asn276 is a catalytic residue.

Belongs to the thiolase-like superfamily. FabH family. Homodimer.

It is found in the cytoplasm. It carries out the reaction malonyl-[ACP] + acetyl-CoA + H(+) = 3-oxobutanoyl-[ACP] + CO2 + CoA. It participates in lipid metabolism; fatty acid biosynthesis. Functionally, catalyzes the condensation reaction of fatty acid synthesis by the addition to an acyl acceptor of two carbons from malonyl-ACP. Catalyzes the first condensation reaction which initiates fatty acid synthesis and may therefore play a role in governing the total rate of fatty acid production. Possesses both acetoacetyl-ACP synthase and acetyl transacylase activities. Its substrate specificity determines the biosynthesis of branched-chain and/or straight-chain of fatty acids. The polypeptide is Beta-ketoacyl-[acyl-carrier-protein] synthase III (Coxiella burnetii (strain CbuK_Q154) (Coxiella burnetii (strain Q154))).